The primary structure comprises 1040 residues: BEM1-interacting protein 2 (1040 aa).

Residues 1–39 form a disordered region; it reads MSNDREVPTLSQLNTTVSRDKDVSDTLSPDFDSKGSATG. Polar residues predominate over residues 8-17; sequence PTLSQLNTTV. 3 positions are modified to phosphoserine: Ser18, Ser24, and Ser28. An SH3 domain is found at 43-107; sequence GNFPMYIAIN…PVVFTQKITV (65 aa). The 65-residue stretch at 266–330 folds into the SAM domain; the sequence is WSPEEITAYF…FKEIEKIKEA (65 aa). Disordered stretches follow at residues 365–412, 437–478, and 491–744; these read YRGH…SQEA, VSPR…WQSP, and IDQY…ARPV. Over residues 372 to 397 the composition is skewed to polar residues; that stretch reads TSQSLEDLPSQQNFIPTPRNTRNSSA. Residues 444–457 are compositionally biased toward pro residues; the sequence is KPPSYPSPAQPPKS. Position 450 is a phosphoserine (Ser450). Residues 459-478 show a composition bias toward polar residues; sequence LLNNTRTSPSPAQLYSWQSP. The segment covering 495–505 has biased composition (low complexity); it reads SSSDSNFNSRS. 3 positions are modified to phosphoserine: Ser519, Ser523, and Ser546. A compositionally biased stretch (basic and acidic residues) spans 557–570; the sequence is SSDRKSSCSSHEEE. Over residues 573 to 598 the composition is skewed to polar residues; that stretch reads QETMNTFERPTSSIYADGSTIASISN. Basic and acidic residues predominate over residues 600-609; it reads KLAHEKEGKK. Positions 632-648 are enriched in low complexity; that stretch reads LKRSSSASRTSSFKKSS. Ser652 is subject to Phosphoserine. The segment covering 654–684 has biased composition (polar residues); it reads FRQQFTDNAARSSSPEENPITSMPSEKNSSP. A compositionally biased stretch (basic residues) spans 690–701; sequence SSKKSRSKRRSV. The segment covering 702 to 732 has biased composition (basic and acidic residues); that stretch reads SAKEAEIFTETVKDDKNKRSASEAIKGETLK. In terms of domain architecture, PH spans 768 to 887; the sequence is DADFSGWMSK…WMAALIKTTI (120 aa). A compositionally biased stretch (low complexity) spans 943 to 957; it reads QLQQQQHDNNQGQAD. Disordered stretches follow at residues 943–986 and 1007–1040; these read QLQQ…NNTT and VARNSSMRGTEKKGKFSTEEDYFGDNSKHKTDKI. Over residues 973-986 the composition is skewed to polar residues; sequence TISTPNLSSANNTT. The segment covering 1015–1024 has biased composition (basic and acidic residues); the sequence is GTEKKGKFST.

In terms of assembly, interacts with BEM1. Interacts with TOS7.

The protein resides in the bud. Its subcellular location is the bud neck. Protein involved in bud formation. Functions redundantly with BOI1 to promote the fusion of secretory vesicles with the plasma membrane at sites of polarized growth. Acts as an abscission inhibitor during cytokinesis in response to chromatin bridges. The protein is BEM1-interacting protein 2 of Saccharomyces cerevisiae (strain ATCC 204508 / S288c) (Baker's yeast).